A 93-amino-acid chain; its full sequence is Small ribosomal subunit protein uS19 (93 aa).

The protein belongs to the universal ribosomal protein uS19 family.

Its function is as follows. Protein S19 forms a complex with S13 that binds strongly to the 16S ribosomal RNA. This chain is Small ribosomal subunit protein uS19, found in Leifsonia xyli subsp. xyli (strain CTCB07).